The chain runs to 489 residues: Metal cation symporter ZIP14 (489 aa).

The N-terminal stretch at 1-28 (MKRLHPALPSCLLLVLFGIWRTAPQTHA) is a signal peptide. Over 29-155 (SSAGLPPLSA…PSAIEVWGYG (127 aa)) the chain is Extracellular. Residues N52, N75, N85, and N100 are each glycosylated (N-linked (GlcNAc...) asparagine). Residues 156–176 (FLCVTVISLCSLMGASVVPFM) traverse the membrane as a helical segment. Topologically, residues 177–184 (KKTFYKRL) are cytoplasmic. A helical membrane pass occupies residues 185 to 205 (LLYFIALAIGTLYSNALFQLI). Over 206-221 (PEAFGFNPQDNYVSKS) the chain is Extracellular. The chain crosses the membrane as a helical span at residues 222–242 (AVVFGGFYLFFFTEKILKMLL). Topologically, residues 243–349 (KQKNEHHHGH…SDGLHNFIDG (107 aa)) are cytoplasmic. Residues 248–255 (HHHGHNHF) carry the HHHGHXHX-motif motif. Residues 350-370 (LAIGASFTVSVFQGISTSVAI) traverse the membrane as a helical segment. Residues 371–394 (LCEEFPHELGDFVILLNAGMSIQQ) lie on the Extracellular side of the membrane. The short motif at 373–378 (EEFPHE) is the XEXPHE-motif element. Residues 395 to 415 (ALFFNFLSACCCYLGLAFGIL) traverse the membrane as a helical segment. Topologically, residues 416–421 (AGSHFS) are cytoplasmic. Residues 422 to 442 (ANWIFALAGGMFLYIALADMF) form a helical membrane-spanning segment. Residues 443–457 (PEMNEVCQEDEKNDS) lie on the Extracellular side of the membrane. Residues 458 to 478 (FLVPFVIQNLGLLTGFSIMLV) traverse the membrane as a helical segment. The Cytoplasmic segment spans residues 479-489 (LTMYSGQIQIG).

It belongs to the ZIP transporter (TC 2.A.5) family. Homotrimer. In terms of processing, ubiquitinated. Ubiquitination occurs upon iron depletion. The ubiquitinated form undergoes proteasomal degradation. Post-translationally, N-glycosylated. N-glycosylation at Asn-100 is required for iron-regulated extraction of the transporter from membranes and subsequent proteasomal degradation. In terms of tissue distribution, widely expressed. Highly and transiently expressed during the early stage of adipocyte differentiation. Strongly expressed in liver, preadipocyte, duodenum and jejunum, moderately in brain, heart, skeletal muscle, spleen, pancreas, kidney and white adipose cells. Expression is almost undetectable in lung, testis and brown adipose cells. Expressed by chondrocytes and pituitary cells. More strongly expressed in brain. As to expression, more strongly expressed in liver, kidney and duodenum.

The protein localises to the cell membrane. The protein resides in the apical cell membrane. It is found in the basolateral cell membrane. Its subcellular location is the early endosome membrane. It localises to the late endosome membrane. The protein localises to the lysosome membrane. It carries out the reaction Zn(2+)(out) + 2 hydrogencarbonate(out) = Zn(2+)(in) + 2 hydrogencarbonate(in). The catalysed reaction is Mn(2+)(out) + 2 hydrogencarbonate(out) = Mn(2+)(in) + 2 hydrogencarbonate(in). The enzyme catalyses Fe(2+)(out) + 2 hydrogencarbonate(out) = Fe(2+)(in) + 2 hydrogencarbonate(in). It catalyses the reaction Cd(2+)(out) + 2 hydrogencarbonate(out) = Cd(2+)(in) + 2 hydrogencarbonate(in). Its activity is regulated as follows. Inhibited by cyanide and therefore dependent of an energy source. Inhibited by DIDS/4,4'-diisothiocyanatostilbene-2,2'-disulfonic acid, an inhibitor hydrogencarbonate-dependent transporters. Electroneutral transporter of the plasma membrane mediating the cellular uptake of the divalent metal cations zinc, manganese and iron that are important for tissue homeostasis, metabolism, development and immunity. Functions as an energy-dependent symporter, transporting through the membranes an electroneutral complex composed of a divalent metal cation and two bicarbonate anions. Beside these endogenous cellular substrates, can also import cadmium a non-essential metal which is cytotoxic and carcinogenic. Controls the cellular uptake by the intestinal epithelium of systemic zinc, which is in turn required to maintain tight junctions and the intestinal permeability. Modifies the activity of zinc-dependent phosphodiesterases, thereby indirectly regulating G protein-coupled receptor signaling pathways important for gluconeogenesis and chondrocyte differentiation. Regulates insulin receptor signaling, glucose uptake, glycogen synthesis and gluconeogenesis in hepatocytes through the zinc-dependent intracellular catabolism of insulin. Through zinc cellular uptake also plays a role in the adaptation of cells to endoplasmic reticulum stress. Major manganese transporter of the basolateral membrane of intestinal epithelial cells, it plays a central role in manganese systemic homeostasis through intestinal manganese uptake. Also involved in manganese extracellular uptake by cells of the blood-brain barrier. May also play a role in manganese and zinc homeostasis participating in their elimination from the blood through the hepatobiliary excretion. Also functions in the extracellular uptake of free iron. May also function intracellularly and mediate the transport from endosomes to cytosol of iron endocytosed by transferrin. Plays a role in innate immunity by regulating the expression of cytokines by activated macrophages. This is Metal cation symporter ZIP14 from Mus musculus (Mouse).